The sequence spans 439 residues: General transcription factor IIE subunit 1 (439 aa).

Alanine 2 is modified (N-acetylalanine). The HTH TFE/IIEalpha-type domain occupies 14 to 104 (LKRLAKYVIR…NYRTLVNVVK (91 aa)). The residue at position 67 (lysine 67) is an N6-acetyllysine. Positions 129, 132, 154, and 157 each coordinate Zn(2+). Residues 129–157 (CPVCSSTFTDLEANQLFDPMTGTFRCTFC) form a C4-type zinc finger. A Phosphoserine modification is found at serine 268. A compositionally biased stretch (low complexity) spans 333–344 (SSAMAGSVGAAA). The disordered stretch occupies residues 333–392 (SSAMAGSVGAAAPVTTANGSDSESETSESDDDSPPRPAAVAVHKREEDEEEDDEFEEVAD). 2 stretches are compositionally biased toward acidic residues: residues 354 to 364 (SESETSESDDD) and 379 to 392 (EDEE…EVAD).

The protein belongs to the TFIIE alpha subunit family. Tetramer of two alpha and two beta chains. Interacts with TAF6/TAFII80. Interacts with ATF7IP. Interacts with SND1. Part of TBP-based Pol II pre-initiation complex (PIC), in which Pol II core assembles with general transcription factors and other specific initiation factors including GTF2E1, GTF2E2, GTF2F1, GTF2F2, TCEA1, ERCC2, ERCC3, GTF2H2, GTF2H3, GTF2H4, GTF2H5, GTF2A1, GTF2A2, GTF2B and TBP; this large multi-subunit PIC complex mediates DNA unwinding and targets Pol II core to the transcription start site where the first phosphodiester bond forms.

Its subcellular location is the nucleus. Its function is as follows. Recruits TFIIH to the initiation complex and stimulates the RNA polymerase II C-terminal domain kinase and DNA-dependent ATPase activities of TFIIH. Both TFIIH and TFIIE are required for promoter clearance by RNA polymerase. The chain is General transcription factor IIE subunit 1 (GTF2E1) from Pongo abelii (Sumatran orangutan).